A 389-amino-acid chain; its full sequence is DNA damage checkpoint control protein RAD17 (389 aa).

Residues 358–389 are disordered; sequence LAPPSAFPAEETQDPDESYHPAPSNTDIPLFL. Over residues 380–389 the composition is skewed to polar residues; that stretch reads PSNTDIPLFL.

Belongs to the rad1 family. As to quaternary structure, component of the checkpoint clamp complex composed of DDC1, MEC3 and RAD17.

The protein localises to the nucleus. In terms of biological role, component of the checkpoint clamp complex involved in the surveillance mechanism that allows the DNA repair pathways to act to restore the integrity of the DNA prior to DNA synthesis or separation of the replicated chromosomes. The protein is DNA damage checkpoint control protein RAD17 (RAD17) of Eremothecium gossypii (strain ATCC 10895 / CBS 109.51 / FGSC 9923 / NRRL Y-1056) (Yeast).